The sequence spans 396 residues: MAKKVVTDLDLKDKKVLVRVDFNVPMKDGKITNDNRIVAALPTIEYILEQNGKAILFSHLGKVKTEEDKEGKSLRPVAARLSELLGKEVKFVPTTRGPELEKAIDELKDGEVLLFENTRFEDIDGKKESKNDPELGKYWASLGDVFVNDAFGTAHRAHASNVGIASNLESAAGFLMEKEIKFIGGVVDNPARPLVAILGGAKVSDKIGVIENLLTKADKVLVGGGMTFTFMAAQGQEIGKSLLEADKVELAKGLLEKAGNKLVLPVDAVVSKEFSNDAPFHTVSADSIPADEMGLDIGQATIDLFTKELQGAKTVVWNGPMGVFELSNFAKGTIGVCEAIANLTDATTIIGGGDSAAAAMDLGFADKFTHISTGGGASLEYLEGKELPGVASISDK.

Substrate is bound by residues 21–23 (DFN), Arg36, 59–62 (HLGK), Arg119, and Arg156. ATP is bound by residues Lys206, Gly294, Glu325, and 352–355 (GGDS).

This sequence belongs to the phosphoglycerate kinase family. As to quaternary structure, monomer.

It is found in the cytoplasm. The catalysed reaction is (2R)-3-phosphoglycerate + ATP = (2R)-3-phospho-glyceroyl phosphate + ADP. Its pathway is carbohydrate degradation; glycolysis; pyruvate from D-glyceraldehyde 3-phosphate: step 2/5. This is Phosphoglycerate kinase from Listeria monocytogenes serotype 4b (strain CLIP80459).